We begin with the raw amino-acid sequence, 74 residues long: Apolipoprotein C-I, acidic form (74 aa).

The first 26 residues, 1-26 (MRLFLSLPVLVVVLSMVLEGPTPAQG), serve as a signal peptide directing secretion.

The protein belongs to the apolipoprotein C1 family.

The protein localises to the secreted. This chain is Apolipoprotein C-I, acidic form (APOC1A), found in Colobus guereza (Mantled guereza).